The primary structure comprises 491 residues: 3-epi-6-deoxocathasterone 23-monooxygenase CYP90D1 (491 aa).

The chain crosses the membrane as a helical span at residues 7–27 (LLFFSFFFFIIIVIFNKINGL). Residue C442 coordinates heme.

This sequence belongs to the cytochrome P450 family. Heme serves as cofactor. In terms of tissue distribution, expressed in leaf vascular tissue.

It localises to the endoplasmic reticulum membrane. The catalysed reaction is 3-epi-6-deoxocathasterone + reduced [NADPH--hemoprotein reductase] + O2 = 6-deoxotyphasterol + oxidized [NADPH--hemoprotein reductase] + H2O + H(+). It carries out the reaction (22S,24R)-22-hydroxy-5alpha-ergostan-3-one + reduced [NADPH--hemoprotein reductase] + O2 = 3-dehydro-6-deoxoteasterone + oxidized [NADPH--hemoprotein reductase] + H2O + H(+). The protein operates within plant hormone biosynthesis; brassinosteroid biosynthesis. Its function is as follows. Involved in brassinosteroid (BR) biosynthesis. May convert teasterone (TE) to 3-dehydroteasterone (3DT, 3-DHT), or 6-deoxoteasterone (6-deoxoTE) to 3-dehydro-6-deoxoteasterone (6-deoxo3DT, 6-deoxo3DHT). C-23 hydroxylase that converts directly (22S,24R)-22-hydroxy-5-alpha-ergostan-3-one and 3-epi-6-deoxocathasterone to 3-dehydro-6-deoxoteasterone (6-deoxo3DT, 6-deoxo3DHT) and 6-deoxotyphasterol (6-deoxoTY), respectively. These C-23 hydroxylation shortcuts bypass campestanol, 6-deoxocathasterone, and 6-deoxoteasterone (6-deoxoTE). Also catalyzes the conversion of cathasterone to teasterone (TE), 6-deoxotyphasterol (6-deoxoTY) to 6-deoxocathasterone (6-deoxoCT), (22S,24R)-22-hydroxyergost-4-en-3-one (22-OH-4-en-3-one) to (22R,23R)-22,23-dihydroxy-campest-4-en-3-one (22,23-diOH-4-en-3-one) and (22S)-22-hydroxycampesterol (22-OHCR) to (22R,23R)-22,23-dihydroxycampesterol (22,23-diOHCR). This chain is 3-epi-6-deoxocathasterone 23-monooxygenase CYP90D1, found in Arabidopsis thaliana (Mouse-ear cress).